A 349-amino-acid polypeptide reads, in one-letter code: uncharacterized protein (349 aa).

The N-terminal stretch at 1–25 is a signal peptide; the sequence is MNKYIKQGAPILGILLAVMFGGREG.

The protein belongs to the bacterial solute-binding protein 1 family. WtpA subfamily.

This is an uncharacterized protein from Methanococcus aeolicus (strain ATCC BAA-1280 / DSM 17508 / OCM 812 / Nankai-3).